We begin with the raw amino-acid sequence, 69 residues long: Small integral membrane protein 20 (69 aa).

Over 1–8 the chain is Mitochondrial matrix; sequence MAAARNLR. The chain crosses the membrane as a helical span at residues 9–29; that stretch reads TALIFGGFISMVGAAFYPIYF. Over 30-69 the chain is Mitochondrial intermembrane; the sequence is RPLLRLEEYQKEQAVNRAGIVQEDVQPPGLKVWSDPFGRK. F66 carries the post-translational modification Phenylalanine amide.

As to quaternary structure, component of the MITRAC (mitochondrial translation regulation assembly intermediate of cytochrome c oxidase complex) complex, the core components of this complex being Coa3/Mitrac12 and Cox14. Interacts with Coa3/Mitrac12 and Cox4i1. Directly interacts with newly synthesized Mt-Co1/Cox1. In terms of tissue distribution, highly expressed in the hypothalamus, substantia nigra reticulata, Edinger-Westphal nucleus, and nucleus of the solitary tract/dorsal motor nucleus of the vagus, the spinal cord, and sensory ganglia (at protein level). Also expressed in the heart, thymus, esophagus, stomach, spleen, lung, pituitary gland, kidney, jejunum, duodenum, ileum, cerebrum, pons, and colon (at protein level). Expressed in preadipocytes and apidocytes (at protein level). Expressed in pancreatic islet cells (at protein level).

The protein resides in the mitochondrion inner membrane. It localises to the secreted. Functionally, component of the MITRAC (mitochondrial translation regulation assembly intermediate of cytochrome c oxidase complex) complex, that regulates cytochrome c oxidase assembly. Promotes the progression of complex assembly after the association of Mt-Co1/Cox11 with Cox4I1 and Cox6c. Chaperone-like assembly factor required to stabilize newly synthesized Mt-Co1/Cox1 and to prevent its premature turnover. Its function is as follows. Peptide involved in a broad spectrum of regulatory functions. Is a ligand for GPR173. As part of the reproductive cycle, it regulates gonadotropin-releasing hormone (GnRH) signaling in the hypothalamus and pituitary gland which augments the release of luteinizing hormone. More specifically, it regulates the expression of transcription factors CEBPB and POU2F1/OCT1 through the cAMP-PKA signaling pathway, which subsequently regulate the expression of GNRHR and KISS1. Plays a protective role in memory retention through activation of GNRHR. Regulates the secretion of AVP by hypothalamic neurons. Plays a role in the transduction of the itch sensation. Induces anxiolytic effects, reducing behavior associated with anxiety. Regulates food intake as well as satiation and satiety by increasing NUCB2 expression in neurons. In the ovary, it regulates follicular growth by stimulating granulosa cell proliferation by increasing the expression of GPR173, CREB1, CYP19A1, KITLG, FSHR, and LHCGR. It also increases the production of estradiol (E2). In the heart, it regulates contractility and relaxation by activating the AKT1-NOS3 and MAPK1-MAPK3 signaling pathways. It also plays a cardioprotective role during ischemia, where it activates the SAFE and RISK pathways. Stimulates the proliferation and differentiation of preadipocytes. In pancreatic islet cells, it induces proliferation of islet cells as well as the production of INS1 and INS2 through activation of the MAPK1-MAPK3 signaling pathways. The protein is Small integral membrane protein 20 of Rattus norvegicus (Rat).